A 243-amino-acid polypeptide reads, in one-letter code: Adenosine 5'-phosphosulfate reductase (243 aa).

[4Fe-4S] cluster is bound by residues C126, C127, C209, and C212. C235 acts as the Nucleophile; cysteine thiosulfonate intermediate in catalysis.

The protein belongs to the PAPS reductase family. CysH subfamily. [4Fe-4S] cluster is required as a cofactor.

The protein resides in the cytoplasm. It carries out the reaction [thioredoxin]-disulfide + sulfite + AMP + 2 H(+) = adenosine 5'-phosphosulfate + [thioredoxin]-dithiol. It functions in the pathway sulfur metabolism; hydrogen sulfide biosynthesis; sulfite from sulfate. Functionally, catalyzes the formation of sulfite from adenosine 5'-phosphosulfate (APS) using thioredoxin as an electron donor. The polypeptide is Adenosine 5'-phosphosulfate reductase (Staphylococcus epidermidis (strain ATCC 12228 / FDA PCI 1200)).